The following is a 101-amino-acid chain: Small ribosomal subunit protein uS14 (101 aa).

The segment covering 1 to 10 has biased composition (basic and acidic residues); sequence MAKKSSIEKN. The segment at 1–25 is disordered; the sequence is MAKKSSIEKNNRRKKMAKNAAPKRE.

Belongs to the universal ribosomal protein uS14 family. In terms of assembly, part of the 30S ribosomal subunit. Contacts proteins S3 and S10.

Its function is as follows. Binds 16S rRNA, required for the assembly of 30S particles and may also be responsible for determining the conformation of the 16S rRNA at the A site. The sequence is that of Small ribosomal subunit protein uS14 from Rhodopseudomonas palustris (strain BisA53).